Here is a 358-residue protein sequence, read N- to C-terminus: Homoserine O-acetyltransferase (358 aa).

Residues 52 to 337 (NVILICHALT…DEPYGHDAFL (286 aa)) form the AB hydrolase-1 domain. Ser148 serves as the catalytic Nucleophile. Residue Arg217 participates in substrate binding. Active-site residues include Asp304 and His333. Asp334 lines the substrate pocket.

This sequence belongs to the AB hydrolase superfamily. MetX family. In terms of assembly, homodimer.

It is found in the cytoplasm. The enzyme catalyses L-homoserine + acetyl-CoA = O-acetyl-L-homoserine + CoA. The protein operates within amino-acid biosynthesis; L-methionine biosynthesis via de novo pathway; O-acetyl-L-homoserine from L-homoserine: step 1/1. Functionally, transfers an acetyl group from acetyl-CoA to L-homoserine, forming acetyl-L-homoserine. This chain is Homoserine O-acetyltransferase, found in Chlorobium luteolum (strain DSM 273 / BCRC 81028 / 2530) (Pelodictyon luteolum).